The sequence spans 149 residues: Deoxyuridine 5'-triphosphate nucleotidohydrolase (149 aa).

Substrate contacts are provided by residues Arg-65–Gly-67, Asn-78, Thr-82–Asp-84, and Lys-92.

It belongs to the dUTPase family. The cofactor is Mg(2+).

It carries out the reaction dUTP + H2O = dUMP + diphosphate + H(+). The protein operates within pyrimidine metabolism; dUMP biosynthesis; dUMP from dCTP (dUTP route): step 2/2. This enzyme is involved in nucleotide metabolism: it produces dUMP, the immediate precursor of thymidine nucleotides and it decreases the intracellular concentration of dUTP so that uracil cannot be incorporated into DNA. The protein is Deoxyuridine 5'-triphosphate nucleotidohydrolase of Chlorobium chlorochromatii (strain CaD3).